Reading from the N-terminus, the 163-residue chain is Carbon monoxide dehydrogenase small chain (163 aa).

The region spanning 4–80 (KIITVNVNGK…GSEVLTVEGL (77 aa)) is the 2Fe-2S ferredoxin-type domain. [2Fe-2S] cluster contacts are provided by Cys-42, Cys-47, Cys-50, Cys-62, Cys-101, Cys-104, Cys-136, and Cys-138.

Dimer of heterotrimers. Each heterotrimer consists of a large, a medium and a small subunit. Requires [2Fe-2S] cluster as cofactor.

The enzyme catalyses CO + a quinone + H2O = a quinol + CO2. Catalyzes the oxidation of carbon monoxide to carbon dioxide. This chain is Carbon monoxide dehydrogenase small chain (cutS), found in Hydrogenophaga pseudoflava (Pseudomonas carboxydoflava).